The chain runs to 316 residues: Protoheme IX farnesyltransferase (316 aa).

The next 9 helical transmembrane spans lie at 34–54, 55–75, 95–115, 118–138, 155–175, 182–202, 228–250, 254–273, and 287–307; these read VMSL…GHIN, PFIG…SGAL, IPAG…LSAF, IILG…TIFF, IVIG…CVTG, IVLF…LALF, IVIY…FASL, AFAT…VLRM, and FAFS…DYAI.

The protein belongs to the UbiA prenyltransferase family. Protoheme IX farnesyltransferase subfamily.

The protein localises to the cell inner membrane. The catalysed reaction is heme b + (2E,6E)-farnesyl diphosphate + H2O = Fe(II)-heme o + diphosphate. It functions in the pathway porphyrin-containing compound metabolism; heme O biosynthesis; heme O from protoheme: step 1/1. Functionally, converts heme B (protoheme IX) to heme O by substitution of the vinyl group on carbon 2 of heme B porphyrin ring with a hydroxyethyl farnesyl side group. This Rhizobium meliloti (strain 1021) (Ensifer meliloti) protein is Protoheme IX farnesyltransferase.